A 114-amino-acid polypeptide reads, in one-letter code: T cell receptor beta variable 19 (114 aa).

A signal peptide spans 1-21 (MSNQVLCCVVLCLLGANTVDG). Residues 22–114 (GITQSPKYLF…TAFYLCASSI (93 aa)) enclose the Ig-like domain. Asn37 carries N-linked (GlcNAc...) asparagine glycosylation. Cys42 and Cys110 form a disulfide bridge.

In terms of assembly, alpha-beta TR is a heterodimer composed of an alpha and beta chain; disulfide-linked. The alpha-beta TR is associated with the transmembrane signaling CD3 coreceptor proteins to form the TR-CD3 (TcR or TCR). The assembly of alpha-beta TR heterodimers with CD3 occurs in the endoplasmic reticulum where a single alpha-beta TR heterodimer associates with one CD3D-CD3E heterodimer, one CD3G-CD3E heterodimer and one CD247 homodimer forming a stable octameric structure. CD3D-CD3E and CD3G-CD3E heterodimers preferentially associate with TR alpha and TR beta chains, respectively. The association of the CD247 homodimer is the last step of TcR assembly in the endoplasmic reticulum and is required for transport to the cell surface. As to quaternary structure, (Microbial infection) Interacts with Staphylococcus aureus enterotoxin type B/SEB.

The protein resides in the cell membrane. Functionally, v region of the variable domain of T cell receptor (TR) beta chain that participates in the antigen recognition. Alpha-beta T cell receptors are antigen specific receptors which are essential to the immune response and are present on the cell surface of T lymphocytes. Recognize peptide-major histocompatibility (MH) (pMH) complexes that are displayed by antigen presenting cells (APC), a prerequisite for efficient T cell adaptive immunity against pathogens. Binding of alpha-beta TR to pMH complex initiates TR-CD3 clustering on the cell surface and intracellular activation of LCK that phosphorylates the ITAM motifs of CD3G, CD3D, CD3E and CD247 enabling the recruitment of ZAP70. In turn ZAP70 phosphorylates LAT, which recruits numerous signaling molecules to form the LAT signalosome. The LAT signalosome propagates signal branching to three major signaling pathways, the calcium, the mitogen-activated protein kinase (MAPK) kinase and the nuclear factor NF-kappa-B (NF-kB) pathways, leading to the mobilization of transcription factors that are critical for gene expression and essential for T cell growth and differentiation. The T cell repertoire is generated in the thymus, by V-(D)-J rearrangement. This repertoire is then shaped by intrathymic selection events to generate a peripheral T cell pool of self-MH restricted, non-autoaggressive T cells. Post-thymic interaction of alpha-beta TR with the pMH complexes shapes TR structural and functional avidity. The chain is T cell receptor beta variable 19 from Homo sapiens (Human).